We begin with the raw amino-acid sequence, 1425 residues long: Zinc finger FYVE domain-containing protein 9 (1425 aa).

Disordered stretches follow at residues 201 to 255 (ESTE…IGRD) and 291 to 352 (EDLT…SGRN). Basic and acidic residues predominate over residues 202–225 (STEKDMNSEKQMDPLNRPKTEGRS). Polar residues-rich tracts occupy residues 230 to 245 (CPTSSDSLASVCSPSQ) and 296 to 312 (KISSPRTDLGSPNSFSH). Residues serine 306 and serine 668 each carry the phosphoserine modification. The FYVE-type zinc finger occupies 699-758 (DSQAPNCMKCEARFTFTKRRHHCRACGKVFCASCCSLKCKLLYMDRKEARVCVICHSVLM). Zn(2+) contacts are provided by cysteine 705, cysteine 708, cysteine 721, cysteine 724, cysteine 729, cysteine 732, cysteine 750, and cysteine 753. Residues 767–823 (MSASSQSPNPNNPAEYCSTIPPLQQAQASGALSSPPPTVMVPVGVLKHPGAEVAQPR) are SBD.

In terms of assembly, interacts (via the SBD region) with SMAD2; the interaction recruits SMAD2 to the TGF-beta receptor and is disrupted by phosphorylation of SMAD2 upon TGF-beta receptor activation. Interacts with SMAD3. Interacts with TGFBR1 and TGFBR2; the interaction recruits SMAD2 to the TGF-beta receptor. Interacts with PML. In terms of tissue distribution, ubiquitous. In the brain found primarily in the cerebrovascular smooth muscle cells and reactive astrocytes.

It localises to the cytoplasm. The protein localises to the early endosome membrane. In terms of biological role, early endosomal protein that functions to recruit SMAD2/SMAD3 to intracellular membranes and to the TGF-beta receptor. Plays a significant role in TGF-mediated signaling by regulating the subcellular location of SMAD2 and SMAD3 and modulating the transcriptional activity of the SMAD3/SMAD4 complex. Possibly associated with TGF-beta receptor internalization. In Homo sapiens (Human), this protein is Zinc finger FYVE domain-containing protein 9 (ZFYVE9).